The following is a 371-amino-acid chain: Transcriptional regulator of yeast form adherence 2 (371 aa).

A C3H1-type 1 zinc finger spans residues 16–44 (RNPAVLCSFYSKIGACRHGEKCSKKHLKP). Over residues 94–107 (TVSQIDDSPHSNSG) the composition is skewed to polar residues. The tract at residues 94-194 (TVSQIDDSPH…NIEDAKLEDT (101 aa)) is disordered. Over residues 115–124 (VETQEVETEN) the composition is skewed to acidic residues. A compositionally biased stretch (basic and acidic residues) spans 132-194 (GDVKIDHNED…NIEDAKLEDT (63 aa)). One can recognise an RRM domain in the interval 192 to 279 (EDTEKDKLPE…KPVYSDLSPV (88 aa)). A C3H1-type 2 zinc finger spans residues 281–309 (DFNDACCEEYRDYHDCQRGAMCNYMHVRL). The segment at 337 to 371 (ELPGDIRSSSSTNDDETNGNENGISSTMAVLEQLS) is disordered. The span at 355-371 (GNENGISSTMAVLEQLS) shows a compositional bias: polar residues.

It is found in the nucleus. Functionally, transcription factor required for yeast cell adherence to silicone substrate. This chain is Transcriptional regulator of yeast form adherence 2 (TRY2), found in Candida albicans (strain SC5314 / ATCC MYA-2876) (Yeast).